Consider the following 133-residue polypeptide: Small ribosomal subunit protein uS8 (133 aa).

This sequence belongs to the universal ribosomal protein uS8 family. In terms of assembly, part of the 30S ribosomal subunit. Contacts proteins S5 and S12.

In terms of biological role, one of the primary rRNA binding proteins, it binds directly to 16S rRNA central domain where it helps coordinate assembly of the platform of the 30S subunit. This Prochlorococcus marinus (strain MIT 9313) protein is Small ribosomal subunit protein uS8.